Reading from the N-terminus, the 100-residue chain is MALSQKALLVLVLSMLLTASDSWARRINCKVFVYAPICRGVAAKRGGDSLSVGGSAELDDTLTDPFLKSEEPKEWRELTRLSRVLQTFLSHPTGEMEQHD.

A signal peptide spans 1–24 (MALSQKALLVLVLSMLLTASDSWA). A disulfide bond links Cys-29 and Cys-38. A propeptide spanning residues 44-100 (KRGGDSLSVGGSAELDDTLTDPFLKSEEPKEWRELTRLSRVLQTFLSHPTGEMEQHD) is cleaved from the precursor.

This sequence belongs to the elevenin family. In terms of assembly, monomer. As to expression, expressed by the venom duct.

It localises to the secreted. Functionally, may mimic the function of prey elevenin neuropeptide. In vivo, intracranial injection in mice induces hyperactivity. This is Elevenin from Conus ammiralis (Admiral cone).